Here is a 412-residue protein sequence, read N- to C-terminus: Serine hydroxymethyltransferase (412 aa).

Residues Leu-117 and 121-123 (GHL) each bind (6S)-5,6,7,8-tetrahydrofolate. Lys-226 bears the N6-(pyridoxal phosphate)lysine mark. 349 to 351 (SPF) contacts (6S)-5,6,7,8-tetrahydrofolate.

This sequence belongs to the SHMT family. Homodimer. It depends on pyridoxal 5'-phosphate as a cofactor.

Its subcellular location is the cytoplasm. The catalysed reaction is (6R)-5,10-methylene-5,6,7,8-tetrahydrofolate + glycine + H2O = (6S)-5,6,7,8-tetrahydrofolate + L-serine. The protein operates within one-carbon metabolism; tetrahydrofolate interconversion. Its pathway is amino-acid biosynthesis; glycine biosynthesis; glycine from L-serine: step 1/1. Its function is as follows. Catalyzes the reversible interconversion of serine and glycine with tetrahydrofolate (THF) serving as the one-carbon carrier. This reaction serves as the major source of one-carbon groups required for the biosynthesis of purines, thymidylate, methionine, and other important biomolecules. Also exhibits THF-independent aldolase activity toward beta-hydroxyamino acids, producing glycine and aldehydes, via a retro-aldol mechanism. The protein is Serine hydroxymethyltransferase of Nitratidesulfovibrio vulgaris (strain ATCC 29579 / DSM 644 / CCUG 34227 / NCIMB 8303 / VKM B-1760 / Hildenborough) (Desulfovibrio vulgaris).